The following is a 712-amino-acid chain: MTPHVMKRDGCKVPFKSERIKEAILRAAKAAEVDDADYCATVAAVVSEQMQGRNQVDINEIQTAVENQLMSGPYKQLARAYIEYRHDRDIEREKRGRLNQEIRGLVEQTNASLLNENANKDSKVIPTQRDLLAGIVAKHYARQHLLPRDVVQAHERGDIHYHDLDYSPFFPMFNCMLIDLKGMLTQGFKMGNAEIEPPKSISTATAVTAQIIAQVASHIYGGTTINRIDEVLAPFVTASYNKHRKTAEEWNIPDAEGYANSRTIKECYDAFQSLEYEVNTLHTANGQTPFVTFGFGLGTSWESRLIQESILRNRIAGLGKNRKTAVFPKLVFAIRDGLNHKKGDPNYDIKQLALECASKRMYPDILNYDQVVKVTGSFKTPMGCRSFLGVWENENGEQIHDGRNNLGVISLNLPRIALEAKGDEATFWKLLDERLVLARKALMTRIARLEGVKARVAPILYMEGACGVRLNADDDVSEIFKNGRASISLGYIGIHETINALFGGEHVYDNEQLRAKGIAIVERLRQAVDQWKEETGYGFSLYSTPSENLCDRFCRLDTAEFGVVPGVTDKGYYTNSFHLDVEKKVNPYDKIDFEAPYPPLANGGFICYGEYPNIQHNLKALEDVWDYSYQHVPYYGTNTPIDECYECGFTGEFECTSKGFTCPKCGNHDASRVSVTRRVCGYLGSPDARPFNAGKQEEVKRRVKHLGNGQIG.

In terms of domain architecture, ATP-cone spans 3-92; that stretch reads PHVMKRDGCK…EYRHDRDIER (90 aa). One can recognise a Glycine radical domain in the interval 583-708; sequence KKVNPYDKID…VKRRVKHLGN (126 aa). 4 residues coordinate Zn(2+): cysteine 644, cysteine 647, cysteine 662, and cysteine 665. Glycine 681 carries the post-translational modification Glycine radical.

This sequence belongs to the anaerobic ribonucleoside-triphosphate reductase family. In terms of assembly, homodimer. Forms a tetramer composed of two NrdD and two NrdG subunits.

The enzyme catalyses a ribonucleoside 5'-triphosphate + formate + H(+) = a 2'-deoxyribonucleoside 5'-triphosphate + CO2 + H2O. It carries out the reaction formate + ATP + H(+) = dATP + CO2 + H2O. It catalyses the reaction CTP + formate + H(+) = dCTP + CO2 + H2O. The catalysed reaction is GTP + formate + H(+) = dGTP + CO2 + H2O. The enzyme catalyses UTP + formate + H(+) = dUTP + CO2 + H2O. Activated under anaerobic conditions by NrdG, a tightly associated activase. Activation involves the formation of a glycyl radical at Gly-681. Exposure of the activated reductase to oxygen leads to C-terminal truncation and inactivation of the protein, by cleavage at the N-terminal side of Gly-681. The presence of zinc protects the protein from proteolysis and prevents the formation of disulfide bridges within it. The enzyme shows a basal activity in the absence of any effector, but reduction is stimulated up to 10-fold by an appropriate modulator (dGTP for ATP reduction, ATP for CTP and UTP reduction, and dTTP for GTP reduction). dGTP and dTTP inhibit the reduction of the incorrect substrate, and dATP inhibits reduction of all four. These modulators act as allosteric effectors. In terms of biological role, catalyzes the conversion of ribonucleotides into deoxyribonucleotides, which are required for DNA synthesis and repair. Can reduce each of the four common ribonucleoside triphosphates. The polypeptide is Anaerobic ribonucleoside-triphosphate reductase (Escherichia coli (strain K12)).